Consider the following 71-residue polypeptide: Phenoloxidase 3 (71 aa).

Residues His-3 and His-29 each coordinate Cu cation.

This sequence belongs to the tyrosinase family. The cofactor is Cu(2+). In terms of processing, upon activation, a trypsin type protease cleaves prophenol oxidase to yield the active enzyme. As to expression, hemocytes and plasma.

It is found in the secreted. It catalyses the reaction 2 L-dopa + O2 = 2 L-dopaquinone + 2 H2O. The enzyme catalyses L-tyrosine + O2 = L-dopaquinone + H2O. In terms of biological role, this is a copper-containing oxidase that functions in the formation of pigments such as melanins and other polyphenolic compounds. Catalyzes the rate-limiting conversions of tyrosine to DOPA, DOPA to DOPA-quinone and possibly 5,6 dihydroxyindole to indole-5'6 quinone. This chain is Phenoloxidase 3, found in Sarcophaga argyrostoma (Flesh fly).